We begin with the raw amino-acid sequence, 52 residues long: Rubredoxin (52 aa).

The Rubredoxin-like domain occupies 1–52 (MKKYVCTVCGYEYDPAEGDPDNGVKPGTSFDDLPADWVCPVCGAPKSEFEAA). Fe cation-binding residues include C6, C9, C39, and C42.

This sequence belongs to the rubredoxin family. Fe(3+) serves as cofactor.

Its subcellular location is the cytoplasm. Its function is as follows. Rubredoxin is a small nonheme, iron protein lacking acid-labile sulfide. Its single Fe, chelated to 4 Cys, functions as an electron acceptor and may also stabilize the conformation of the molecule. Functionally, electron acceptor for cytoplasmic lactate dehydrogenase. In Nitratidesulfovibrio vulgaris (strain ATCC 29579 / DSM 644 / CCUG 34227 / NCIMB 8303 / VKM B-1760 / Hildenborough) (Desulfovibrio vulgaris), this protein is Rubredoxin (rub).